Here is a 429-residue protein sequence, read N- to C-terminus: MKKFDKSIAAFEEAQNLMPGGVNSPVRAFKSVGMNPLFMERGKGSKVYDIDGNEYIDYVLSWGPLIHGHANDRVVEALKAVAEKGTSFGAPTEIENKLAQLVIERVPSIEIVRMVNSGTEATMSALRLARGYTGRNKILKFIGCYHGHGDSLLIKAGSGVATLGLPDSPGVPEGVAKNTITVAYNDLESVKYAFEQFGDDIACIIVEPVAGNMGVVPPQPGFLEGLREVTEQNGALLIFDEVMTGFRVAYNCGQGYYGVTPDLTCLGKVIGGGLPVGAYGGKAEIMRQVAPSGPIYQAGTLSGNPLAMTAGYETLVQLTPESYVEFERKAEMLEAGLRKAAEKHNIPHHINRAGSMIGIFFTDEQVINYDAAKSSNLEFFAAYYREMVEQGVFLPPSQFEGLFLSTAHSDADIEATIAAAEIAMSKLKA.

An N6-(pyridoxal phosphate)lysine modification is found at lysine 268.

This sequence belongs to the class-III pyridoxal-phosphate-dependent aminotransferase family. HemL subfamily. In terms of assembly, homodimer. Pyridoxal 5'-phosphate is required as a cofactor.

It localises to the cytoplasm. The enzyme catalyses (S)-4-amino-5-oxopentanoate = 5-aminolevulinate. The protein operates within porphyrin-containing compound metabolism; protoporphyrin-IX biosynthesis; 5-aminolevulinate from L-glutamyl-tRNA(Glu): step 2/2. This is Glutamate-1-semialdehyde 2,1-aminomutase 2 from Bacillus mycoides (strain KBAB4) (Bacillus weihenstephanensis).